Reading from the N-terminus, the 61-residue chain is Large ribosomal subunit protein uL30 (61 aa).

Belongs to the universal ribosomal protein uL30 family. In terms of assembly, part of the 50S ribosomal subunit.

This is Large ribosomal subunit protein uL30 from Marinomonas sp. (strain MWYL1).